Consider the following 176-residue polypeptide: RNA pyrophosphohydrolase (176 aa).

A Nudix hydrolase domain is found at 6 to 149 (GYRPNVGIVI…KRDVYRRVMK (144 aa)). Residues 38-59 (GGINPGESAEQAMYRELFEEVG) carry the Nudix box motif.

Belongs to the Nudix hydrolase family. RppH subfamily. It depends on a divalent metal cation as a cofactor.

Accelerates the degradation of transcripts by removing pyrophosphate from the 5'-end of triphosphorylated RNA, leading to a more labile monophosphorylated state that can stimulate subsequent ribonuclease cleavage. The chain is RNA pyrophosphohydrolase from Shigella boydii serotype 4 (strain Sb227).